Reading from the N-terminus, the 634-residue chain is Chaperone protein DnaK (634 aa).

Thr-199 is subject to Phosphothreonine; by autocatalysis. The segment covering 601-618 (AAAGQAQAESGAGAQGNA) has biased composition (low complexity). Residues 601 to 634 (AAAGQAQAESGAGAQGNAKPDDVVDAEFEEVDKK) form a disordered region. A compositionally biased stretch (acidic residues) spans 623-634 (VVDAEFEEVDKK).

Belongs to the heat shock protein 70 family.

Functionally, acts as a chaperone. The chain is Chaperone protein DnaK from Acidithiobacillus ferrooxidans (strain ATCC 23270 / DSM 14882 / CIP 104768 / NCIMB 8455) (Ferrobacillus ferrooxidans (strain ATCC 23270)).